A 152-amino-acid polypeptide reads, in one-letter code: Superoxide dismutase [Cu-Zn] 2 (152 aa).

Residues His45, His47, and His62 each coordinate Cu cation. Cys56 and Cys145 are oxidised to a cystine. Residues His62, His70, His79, and Asp82 each coordinate Zn(2+). His119 lines the Cu cation pocket.

The protein belongs to the Cu-Zn superoxide dismutase family. In terms of assembly, homodimer. Cu cation is required as a cofactor. The cofactor is Zn(2+).

The protein localises to the cytoplasm. It catalyses the reaction 2 superoxide + 2 H(+) = H2O2 + O2. Its function is as follows. Destroys radicals which are normally produced within the cells and which are toxic to biological systems. In Solanum lycopersicum (Tomato), this protein is Superoxide dismutase [Cu-Zn] 2 (SODCC.5).